The sequence spans 759 residues: Protein MTSS 1 (759 aa).

Residues 1–254 (MEAVIEKECS…EQVILDLKGS (254 aa)) enclose the IMD domain. The stretch at 108-157 (LQEQMEEWKKVANQLDKDHAKEYKKARQEIKNKSSDTLKLQKKAKKVDAQ) forms a coiled coil. A disordered region spans residues 259–309 (SYQTPPSSPSTTMSRKSSVCSSLNSVNSSDSRSSGSHSHSPSSHYRYRSSN). Thr-262 is modified (phosphothreonine). 4 positions are modified to phosphoserine: Ser-265, Ser-266, Ser-275, and Ser-326. The interval 331–354 (QDAFQSKSPSPMPPEAANQLSNGF) is disordered. Thr-429 is subject to Phosphothreonine. Disordered stretches follow at residues 431 to 472 (QRRK…AATR) and 569 to 759 (KRPA…PRFS). A Phosphothreonine modification is found at Thr-607. Positions 612–627 (PIPIKTPVIPVKTPTV) are enriched in low complexity. 2 positions are modified to phosphoserine: Ser-648 and Ser-651. Over residues 660–670 (GVSNIPSSLWS) the composition is skewed to polar residues. Residues 675–685 (VNPPLPGPKPS) show a composition bias toward pro residues. The 18-residue stretch at 731-748 (QGEDMLNAIRRGVKLKKT) folds into the WH2 domain.

Belongs to the MTSS family. As to quaternary structure, binds to actin. As to expression, strongly expressed in the developing neurons and skeletal and cardiac muscles in embryos. Strongly expressed also in liver, outer layers of the kidney, and in the Purkinje cells of the brain.

The protein localises to the cytoplasm. Its subcellular location is the cytoskeleton. In terms of biological role, inhibits the nucleation of actin filaments in vitro. This is Protein MTSS 1 from Mus musculus (Mouse).